A 741-amino-acid chain; its full sequence is Wall-associated receptor kinase 3 (741 aa).

The first 23 residues, 1-23, serve as a signal peptide directing secretion; that stretch reads MKFQEGVFLVVIFFLAYTQLVKG. The Extracellular segment spans residues 24-342; that stretch reads QHQPREDCKL…CTRPEYKRTR (319 aa). N-linked (GlcNAc...) asparagine glycosylation is found at asparagine 37, asparagine 59, asparagine 78, asparagine 100, asparagine 103, asparagine 141, asparagine 192, asparagine 199, asparagine 232, asparagine 246, asparagine 261, and asparagine 266. The EGF-like 1 domain maps to 245–292; it reads GNQTCEQAGSTRICGKNSSCYNSTTRNGYICKCNEGYDGNPYRSEGCK. 6 disulfides stabilise this stretch: cysteine 249/cysteine 264, cysteine 258/cysteine 275, cysteine 277/cysteine 291, cysteine 297/cysteine 310, cysteine 304/cysteine 319, and cysteine 321/cysteine 333. The EGF-like 2; calcium-binding domain occupies 293 to 334; the sequence is DIDECISDTHNCSDPKTCRNRDGGFDCKCPSGYDLNSSMSCT. Asparagine 303 carries an N-linked (GlcNAc...) asparagine glycan. An N-linked (GlcNAc...) asparagine glycan is attached at asparagine 328. The chain crosses the membrane as a helical span at residues 343 to 363; that stretch reads IFLVIIIGVLVLLLAAICIQH. The Cytoplasmic portion of the chain corresponds to 364–741; it reads ATKQRKYTKL…VAILDIETGR (378 aa). Residue threonine 404 is modified to Phosphothreonine. The region spanning 415–698 is the Protein kinase domain; sequence YDESRILGQG…RVEKTKHKWS (284 aa). ATP contacts are provided by residues 421 to 429 and lysine 443; that span reads LGQGGQGTV. Phosphotyrosine is present on tyrosine 488. Aspartate 540 serves as the catalytic Proton acceptor. Residues threonine 574 and threonine 579 each carry the phosphothreonine modification. Position 587 is a phosphotyrosine (tyrosine 587).

Belongs to the protein kinase superfamily. Ser/Thr protein kinase family. As to expression, predominantly expressed in green tissues such as stems and leaves.

It localises to the membrane. It carries out the reaction L-seryl-[protein] + ATP = O-phospho-L-seryl-[protein] + ADP + H(+). The catalysed reaction is L-threonyl-[protein] + ATP = O-phospho-L-threonyl-[protein] + ADP + H(+). Serine/threonine-protein kinase that may function as a signaling receptor of extracellular matrix component. Binding to pectin may have significance in the control of cell expansion, morphogenesis and development. In Arabidopsis thaliana (Mouse-ear cress), this protein is Wall-associated receptor kinase 3 (WAK3).